A 71-amino-acid polypeptide reads, in one-letter code: Mitotic-spindle organizing protein 1 (71 aa).

This sequence belongs to the MOZART1 family. In terms of assembly, part of the gamma-tubulin complex.

Its subcellular location is the cytoplasm. The protein localises to the cytoskeleton. It localises to the microtubule organizing center. The protein resides in the spindle pole body. Functionally, required for gamma-tubulin complex recruitment to the microtubule organizing center (MTOC). This Aspergillus clavatus (strain ATCC 1007 / CBS 513.65 / DSM 816 / NCTC 3887 / NRRL 1 / QM 1276 / 107) protein is Mitotic-spindle organizing protein 1.